The chain runs to 157 residues: Endoribonuclease YbeY (157 aa).

Zn(2+)-binding residues include His114, His118, and His124.

The protein belongs to the endoribonuclease YbeY family. Zn(2+) serves as cofactor.

The protein resides in the cytoplasm. Single strand-specific metallo-endoribonuclease involved in late-stage 70S ribosome quality control and in maturation of the 3' terminus of the 16S rRNA. The chain is Endoribonuclease YbeY from Yersinia pseudotuberculosis serotype O:3 (strain YPIII).